A 319-amino-acid chain; its full sequence is MGQGLWRVARNHHLQQEAYSETGYLSREQSRRVASSNISHTSHRKQAQGGIDIYHLLKARKSKEQEGFINLEMLPPELSFTILSYLNATDLCLASCVWQDLANDELLWQGLCKSTWGHCSIYNKNPPLGFSFRKLYMQLDEGSLTFNANPEEGVSYFMSKGILDDSPKEIAKFIFCTRTLNWKKLRIYLDERRDVLDDLVTLHNFRNQFLPNALREFFRHIHAPEERGEYLETLITKFSHRFCACNPDLMRELGLSPDAVYVLCYSLILLSIDLTSPHVKNKMSKREFIRNTRRAAQNISEDFVGHLYDNIYLIGHVAA.

The 44-residue stretch at 68–111 folds into the F-box domain; that stretch reads FINLEMLPPELSFTILSYLNATDLCLASCVWQDLANDELLWQGL. One can recognise an SEC7 domain in the interval 146-276; that stretch reads FNANPEEGVS…LILLSIDLTS (131 aa).

As to expression, high expression in brain, heart, kidney, liver, lung, skeletal muscle, testis, and day-7 embryos.

Functionally, may promote guanine-nucleotide exchange on an ARF. Promotes the activation of ARF through replacement of GDP with GTP (Potential). The polypeptide is F-box only protein 8 (Fbxo8) (Mus musculus (Mouse)).